A 553-amino-acid polypeptide reads, in one-letter code: Sulfatase (553 aa).

An N-terminal signal peptide occupies residues 1 to 25 (MTSEMKKFSKIVLFGLLISPLLASS). 3 residues coordinate Ca(2+): Asp-43, Asp-44, and Cys-88. Catalysis depends on Cys-88, which acts as the Nucleophile. Cys-88 carries the 3-oxoalanine (Cys) modification. His-159 is a catalytic residue. 2 residues coordinate Ca(2+): Asp-350 and Asn-351.

The protein belongs to the sulfatase family. Requires Ca(2+) as cofactor. Post-translationally, the conversion to 3-oxoalanine (also known as C-formylglycine, FGly), of a serine or cysteine residue in prokaryotes and of a cysteine residue in eukaryotes, is critical for catalytic activity. This post-translational modification is severely defective in multiple sulfatase deficiency (MSD).

The protein resides in the secreted. In terms of biological role, sulfatase that may be involved in ulvan degradation. Ulvan is the main polysaccharide component of the Ulvales (green seaweed) cell wall. It is composed of disaccharide building blocks comprising 3-sulfated rhamnose (Rha3S) linked to D-glucuronic acid (GlcA), L-iduronic acid (IduA), or D-xylose (Xyl). This Formosa agariphila (strain DSM 15362 / KCTC 12365 / LMG 23005 / KMM 3901 / M-2Alg 35-1) protein is Sulfatase.